Here is a 204-residue protein sequence, read N- to C-terminus: Thymidylate kinase (204 aa).

Residue 9–16 (GIEASGKT) coordinates ATP.

This sequence belongs to the thymidylate kinase family.

The catalysed reaction is dTMP + ATP = dTDP + ADP. Its function is as follows. Phosphorylation of dTMP to form dTDP in both de novo and salvage pathways of dTTP synthesis. The chain is Thymidylate kinase from Sulfurihydrogenibium sp. (strain YO3AOP1).